The sequence spans 419 residues: Glutamate dehydrogenase (419 aa).

The active site involves Lys105. NAD(+) is bound at residue 219–225 (GYGNAGY).

Belongs to the Glu/Leu/Phe/Val dehydrogenases family. As to quaternary structure, homohexamer.

It carries out the reaction L-glutamate + NAD(+) + H2O = 2-oxoglutarate + NH4(+) + NADH + H(+). The catalysed reaction is L-glutamate + NADP(+) + H2O = 2-oxoglutarate + NH4(+) + NADPH + H(+). This chain is Glutamate dehydrogenase (gdhA), found in Thermococcus profundus.